A 70-amino-acid chain; its full sequence is Small ribosomal subunit protein bS21C (70 aa).

Residues 38 to 70 (YEKPTTERKRKKAAAVARLRKQVRRSMPPKKKY) are disordered. Over residues 45–70 (RKRKKAAAVARLRKQVRRSMPPKKKY) the composition is skewed to basic residues.

Belongs to the bacterial ribosomal protein bS21 family.

The protein is Small ribosomal subunit protein bS21C of Burkholderia thailandensis (strain ATCC 700388 / DSM 13276 / CCUG 48851 / CIP 106301 / E264).